The primary structure comprises 220 residues: Ribose-5-phosphate isomerase A (220 aa).

Substrate contacts are provided by residues 28–31 (TGST), 81–84 (DGAD), and 94–97 (KGGG). Residue E103 is the Proton acceptor of the active site. K121 contributes to the substrate binding site.

It belongs to the ribose 5-phosphate isomerase family. As to quaternary structure, homodimer.

The enzyme catalyses aldehydo-D-ribose 5-phosphate = D-ribulose 5-phosphate. Its pathway is carbohydrate degradation; pentose phosphate pathway; D-ribose 5-phosphate from D-ribulose 5-phosphate (non-oxidative stage): step 1/1. Its function is as follows. Catalyzes the reversible conversion of ribose-5-phosphate to ribulose 5-phosphate. This chain is Ribose-5-phosphate isomerase A, found in Aromatoleum aromaticum (strain DSM 19018 / LMG 30748 / EbN1) (Azoarcus sp. (strain EbN1)).